The following is a 120-amino-acid chain: Aspartate 1-decarboxylase (120 aa).

S25 acts as the Schiff-base intermediate with substrate; via pyruvic acid in catalysis. S25 bears the Pyruvic acid (Ser) mark. A substrate-binding site is contributed by T57. Y58 (proton donor) is an active-site residue. Position 73 to 75 (73 to 75 (GAA)) interacts with substrate.

This sequence belongs to the PanD family. In terms of assembly, heterooctamer of four alpha and four beta subunits. Requires pyruvate as cofactor. Post-translationally, is synthesized initially as an inactive proenzyme, which is activated by self-cleavage at a specific serine bond to produce a beta-subunit with a hydroxyl group at its C-terminus and an alpha-subunit with a pyruvoyl group at its N-terminus.

Its subcellular location is the cytoplasm. The enzyme catalyses L-aspartate + H(+) = beta-alanine + CO2. It participates in cofactor biosynthesis; (R)-pantothenate biosynthesis; beta-alanine from L-aspartate: step 1/1. Functionally, catalyzes the pyruvoyl-dependent decarboxylation of aspartate to produce beta-alanine. The chain is Aspartate 1-decarboxylase from Ralstonia nicotianae (strain ATCC BAA-1114 / GMI1000) (Ralstonia solanacearum).